Reading from the N-terminus, the 230-residue chain is Large ribosomal subunit protein uL1 (230 aa).

It belongs to the universal ribosomal protein uL1 family. As to quaternary structure, part of the 50S ribosomal subunit.

Functionally, binds directly to 23S rRNA. The L1 stalk is quite mobile in the ribosome, and is involved in E site tRNA release. Its function is as follows. Protein L1 is also a translational repressor protein, it controls the translation of the L11 operon by binding to its mRNA. The protein is Large ribosomal subunit protein uL1 of Nitrobacter hamburgensis (strain DSM 10229 / NCIMB 13809 / X14).